A 1883-amino-acid polypeptide reads, in one-letter code: AF4/FMR2 family member lilli (1883 aa).

A compositionally biased stretch (low complexity) spans 1-45 (MAQQQQQQHLQQQQQQHHQQQQLQQLQQQQQLPQYNNNLYNLNYN). Disordered stretches follow at residues 1-88 (MAQQ…SEGD), 140-311 (INST…EKDI), 329-381 (SIAA…SCTT), 449-540 (MPTP…HHQH), 609-654 (LGGG…HLSR), 796-827 (SISSGSASGSSSSDSAAGEVVPLPGPGETLQI), 844-901 (MQQK…KKHA), 922-962 (TAAA…LAKG), 992-1018 (VAGSRKREHSSNSSSNGNTPTKKLHAA), 1039-1075 (TAAAGSSSDEDSTSSSCSSTKSSNSSSSGSDSEATAT), 1115-1145 (KNNRLYGAGSSSNSSSSETEEQQQQQQQHKQ), 1170-1238 (QHQQ…KSDK), 1358-1413 (YAAE…GART), 1450-1510 (EHGV…DQVS), 1543-1583 (ANGS…KATT), 1595-1641 (QTST…PPSD), and 1783-1803 (PSNSVGSQGSGSNTPPGRIVP). Basic and acidic residues predominate over residues 57 to 80 (REKYERQQGIQSDDRETSLFEAPR). Composition is skewed to low complexity over residues 140-154 (INSTTTTSSSASLLP), 161-178 (QQQQQQQQQQQQHYQQQQ), 223-253 (SASSSSSASNNNSSSATNNATAAAATSASTA), and 362-381 (PLNSPPAASGASSSSLSCTT). Pro residues predominate over residues 450 to 462 (PTPPKASPTPPTA). A Phosphothreonine modification is found at Thr458. The segment covering 466 to 479 (LKSEKNHSLEKQDS) has biased composition (basic and acidic residues). A compositionally biased stretch (acidic residues) spans 481 to 491 (LENDLELSESD). 2 positions are modified to phosphoserine: Ser488 and Ser490. A compositionally biased stretch (low complexity) spans 500–540 (SAGNSSNSSETDSSESGSEASSKGEAQQQQQQQQQLLHHQH). Gly residues predominate over residues 609–625 (LGGGGGSGSTGGGGGSS). Composition is skewed to low complexity over residues 626–639 (SSGMGNMSSSSSSN) and 796–813 (SISSGSASGSSSSDSAAG). Positions 867 to 877 (PRQKKPRKKKM) are enriched in basic residues. Residues Ser887 and Ser888 each carry the phosphoserine modification. Residues 930–942 (KKGRGRPRKQQQQ) constitute a DNA-binding region (a.T hook). Over residues 939–962 (QQQQLQQTQSGNLSSASAGSLAKG) the composition is skewed to low complexity. Ser953 and Ser955 each carry phosphoserine. 5 stretches are compositionally biased toward low complexity: residues 1124–1145 (SSSNSSSSETEEQQQQQQQHKQ), 1170–1186 (QHQQQQPLQPQQQQQQQ), 1200–1222 (SSSSDGSSSSSTDSSSTNSSSSS), 1362–1376 (QQQQQQQHLHTQQLH), and 1385–1399 (HYQQQHQPHQQKAQQ). Basic and acidic residues predominate over residues 1450 to 1467 (EHGVKPEPELDAGYEAKY). Ser1546 is modified (phosphoserine). Thr1548 is subject to Phosphothreonine. 2 stretches are compositionally biased toward low complexity: residues 1558 to 1583 (QQQQHQQQQQQQQHQPQHQQQLKATT) and 1595 to 1606 (QTSTTATQQPTT). Residues 1614-1625 (TPPPVAPPPPPR) are compositionally biased toward pro residues. A compositionally biased stretch (low complexity) spans 1783–1794 (PSNSVGSQGSGS).

Belongs to the AF4 family.

It localises to the nucleus. In terms of biological role, has a role in transcriptional regulation. Acts in parallel with the Ras/MAPK and the PI3K/PKB pathways in the control of cell identity and cellular growth. Essential for regulation of the cytoskeleton and cell growth but not for cell proliferation or growth rate. Required specifically for the microtubule-based basal transport of lipid droplets. Plays a partially redundant function downstream of Raf in cell fate specification in the developing eye. Pair-rule protein that regulates embryonic cellularization, gastrulation and segmentation. The chain is AF4/FMR2 family member lilli from Drosophila grimshawi (Hawaiian fruit fly).